Reading from the N-terminus, the 335-residue chain is Avermitilol synthase (335 aa).

Mg(2+)-binding residues include Asp80, Asp84, Asn219, Ser223, and Glu227. The DDXXD motif signature appears at 80 to 84; it reads DDQFD.

Belongs to the terpene synthase family. The cofactor is Mg(2+).

The enzyme catalyses (2E,6E)-farnesyl diphosphate + H2O = avermitilol + diphosphate. Catalyzes the cyclization of farnesyl diphosphate to avermitilol. The sequence is that of Avermitilol synthase (tpc1) from Streptomyces avermitilis (strain ATCC 31267 / DSM 46492 / JCM 5070 / NBRC 14893 / NCIMB 12804 / NRRL 8165 / MA-4680).